A 502-amino-acid chain; its full sequence is Glycerol kinase (502 aa).

Residue Thr14 participates in ADP binding. ATP is bound by residues Thr14, Thr15, and Ser16. Sn-glycerol 3-phosphate is bound at residue Thr14. ADP is bound at residue Arg18. Sn-glycerol 3-phosphate is bound by residues Arg84, Glu85, and Tyr136. 3 residues coordinate glycerol: Arg84, Glu85, and Tyr136. His232 carries the post-translational modification Phosphohistidine; by HPr. Residue Asp246 participates in sn-glycerol 3-phosphate binding. Glycerol contacts are provided by Asp246 and Gln247. Thr268 and Gly311 together coordinate ADP. ATP is bound by residues Thr268, Gly311, Gln315, and Gly412. Gly412 and Asn416 together coordinate ADP.

It belongs to the FGGY kinase family. In terms of assembly, homotetramer and homodimer (in equilibrium). In terms of processing, the phosphoenolpyruvate-dependent sugar phosphotransferase system (PTS), including enzyme I, and histidine-containing protein (HPr) are required for the phosphorylation, which leads to the activation of the enzyme.

The enzyme catalyses glycerol + ATP = sn-glycerol 3-phosphate + ADP + H(+). It functions in the pathway polyol metabolism; glycerol degradation via glycerol kinase pathway; sn-glycerol 3-phosphate from glycerol: step 1/1. With respect to regulation, activated by phosphorylation and inhibited by fructose 1,6-bisphosphate (FBP). Key enzyme in the regulation of glycerol uptake and metabolism. Catalyzes the phosphorylation of glycerol to yield sn-glycerol 3-phosphate. The protein is Glycerol kinase of Streptococcus pneumoniae serotype 19F (strain G54).